Here is a 279-residue protein sequence, read N- to C-terminus: Conserved oligomeric Golgi complex subunit 7 (279 aa).

Component of the conserved oligomeric Golgi (COG or Sec34/Sec35) complex which consists of eight different proteins COG1-COG8.

It localises to the golgi apparatus membrane. Functionally, acts as a component of the peripheral membrane COG complex that is involved in intra-Golgi protein trafficking. COG is located at the cis-Golgi, and regulates tethering of retrograde intra-Golgi vesicles and possibly a number of other membrane trafficking events. The chain is Conserved oligomeric Golgi complex subunit 7 (COG7) from Saccharomyces cerevisiae (strain ATCC 204508 / S288c) (Baker's yeast).